The sequence spans 404 residues: 11-beta-hydroxysteroid dehydrogenase type 2 (404 aa).

Position 82–111 (82–111 (TRAVLITGCDSGFGNATAKKLDTMGFTVLA)) interacts with NAD(+). Serine 219 is a binding site for substrate. Tyrosine 232 serves as the catalytic Proton acceptor. The tract at residues 383–404 (LTSARDIAQDQGPRPDPSPTAQ) is disordered.

Belongs to the short-chain dehydrogenases/reductases (SDR) family. In terms of assembly, interacts with ligand-free cytoplasmic NR3C2. In terms of tissue distribution, highly expressed in kidney, adrenal and colon; detected at lower levels on lung, liver, and spleen. Expressed in oocytes. Expressed in uterine tissues and in corpora lutea.

The protein resides in the microsome. It localises to the endoplasmic reticulum. The catalysed reaction is an 11beta-hydroxysteroid + NAD(+) = an 11-oxosteroid + NADH + H(+). It carries out the reaction corticosterone + NAD(+) = 11-dehydrocorticosterone + NADH + H(+). It catalyses the reaction cortisol + NAD(+) = cortisone + NADH + H(+). The enzyme catalyses 11beta,17beta-dihydroxyandrost-4-ene-3-one + NAD(+) = 17beta-hydroxyandrost-4-ene-3,11-dione + NADH + H(+). The catalysed reaction is 11beta-hydroxyandrost-4-ene-3,17-dione + NAD(+) = androst-4-ene-3,11,17-trione + NADH + H(+). Its pathway is steroid metabolism. With respect to regulation, inhibited by glycyrrhetinic acid, carbenoloxone, 11-alpha-OH-progesterone and 11-beta-OH-progesterone. In terms of biological role, catalyzes the conversion of biologically active 11beta-hydroxyglucocorticoids (11beta-hydroxysteroid) such as cortisol, to inactive 11-ketoglucocorticoids (11-oxosteroid) such as cortisone, in the presence of NAD(+). Functions as a dehydrogenase (oxidase), thereby decreasing the concentration of active glucocorticoids, thus protecting the nonselective mineralocorticoid receptor from occupation by glucocorticoids. Affinity towards corticosterone is higher than cortisol or dexamethasone. Plays an important role in maintaining glucocorticoids balance during preimplantation and protects the fetus from excessive maternal corticosterone exposure. Catalyzes the oxidation of 11beta-hydroxytestosterone (11beta,17beta-dihydroxyandrost-4-ene-3-one) to 11-ketotestosterone (17beta-hydroxyandrost-4-ene-3,11-dione), a major bioactive androgen. Catalyzes the conversion of 11beta-hydroxyandrostenedione (11beta-hydroxyandrost-4-ene-3,17-dione) to 11-ketoandrostenedione (androst-4-ene-3,11,17-trione), which can be further metabolized to 11-ketotestosterone. Converts 7-beta-25-dihydroxycholesterol to 7-oxo-25-hydroxycholesterol in vitro. 7-beta-25-dihydroxycholesterol (not 7-oxo-25-hydroxycholesterol) acts as ligand for the G-protein-coupled receptor (GPCR) Epstein-Barr virus-induced gene 2 (EBI2) and may thereby regulate immune cell migration. May protect ovulating oocytes and fertilizing spermatozoa from the adverse effects of cortisol. This is 11-beta-hydroxysteroid dehydrogenase type 2 (HSD11B2) from Bos taurus (Bovine).